A 202-amino-acid chain; its full sequence is Apolipoprotein R (202 aa).

The N-terminal stretch at 1 to 28 (MPPNLQRIFPALCLLGVLFLLHCTPVLC) is a signal peptide. Sushi domains lie at 29-87 (GCDN…QCKA) and 88-145 (LCPK…KCEW). 4 disulfide bridges follow: cysteine 30–cysteine 73, cysteine 59–cysteine 85, cysteine 89–cysteine 130, and cysteine 116–cysteine 143.

Forms high molecular weight disulfide-linked complexes. In terms of tissue distribution, plasma. Found on very low-density lipoprotein (VLDL), on chylomicrons, and in the D &gt; 1.21 g/ml fraction of pig plasma. Found in liver, spleen, lung, bone marrow and lymph node.

It is found in the secreted. May be a lipoprotein-borne regulator of either the coagulation or the complement cascades. The protein is Apolipoprotein R (APOR) of Sus scrofa (Pig).